We begin with the raw amino-acid sequence, 68 residues long: MPQKDPCQKQACEIQKCLQANSYMESKCQAVIQELRKCCAQYPKGRSVVCSGFEKEEEENLTRKSASK.

Residues 4–46 (KDPCQKQACEIQKCLQANSYMESKCQAVIQELRKCCAQYPKGR) enclose the CHCH domain. 2 consecutive short sequence motifs (cx9C motif) follow at residues 7 to 17 (CQKQACEIQKC) and 28 to 38 (CQAVIQELRKC). Cystine bridges form between Cys-7/Cys-38, Cys-17/Cys-28, and Cys-39/Cys-50.

It belongs to the CMC4 family. As to expression, expressed in many tissues with a relatively high level in skeletal muscle.

It is found in the mitochondrion. The polypeptide is Cx9C motif-containing protein 4 (CMC4) (Homo sapiens (Human)).